Reading from the N-terminus, the 326-residue chain is Transcription cofactor vestigial-like protein 3 (326 aa).

A disordered region spans residues 54–82; that stretch reads SLEVTLPSKQEEEEEEEEDEEEEEKDQPA. Lysine 62 is covalently cross-linked (Glycyl lysine isopeptide (Lys-Gly) (interchain with G-Cter in SUMO2)). The span at 64 to 78 shows a compositional bias: acidic residues; it reads EEEEEEEEDEEEEEK. A Glycyl lysine isopeptide (Lys-Gly) (interchain with G-Cter in SUMO2) cross-link involves residue lysine 129. The segment at 184–208 is disordered; the sequence is TADPNSWPGHGLHQTGPAPPPTASE.

This sequence belongs to the vestigial family.

It is found in the nucleus. May act as a specific coactivator for the mammalian TEFs. This is Transcription cofactor vestigial-like protein 3 from Mus musculus (Mouse).